A 400-amino-acid polypeptide reads, in one-letter code: Transposase for insertion sequence element ISRM3 (400 aa).

This sequence belongs to the transposase mutator family.

In terms of biological role, required for the transposition of the insertion element. The sequence is that of Transposase for insertion sequence element ISRM3 from Rhizobium meliloti (strain 1021) (Ensifer meliloti).